The chain runs to 428 residues: Glutamyl-tRNA reductase (428 aa).

Residues 49–52 (TCNR), serine 109, 114–116 (EGQ), and glutamine 120 contribute to the substrate site. Catalysis depends on cysteine 50, which acts as the Nucleophile. An NADP(+)-binding site is contributed by 189 to 194 (GAGKMS).

The protein belongs to the glutamyl-tRNA reductase family. Homodimer.

It carries out the reaction (S)-4-amino-5-oxopentanoate + tRNA(Glu) + NADP(+) = L-glutamyl-tRNA(Glu) + NADPH + H(+). It functions in the pathway porphyrin-containing compound metabolism; protoporphyrin-IX biosynthesis; 5-aminolevulinate from L-glutamyl-tRNA(Glu): step 1/2. It participates in porphyrin-containing compound metabolism; chlorophyll biosynthesis. In terms of biological role, catalyzes the NADPH-dependent reduction of glutamyl-tRNA(Glu) to glutamate 1-semialdehyde (GSA). The sequence is that of Glutamyl-tRNA reductase from Microcystis aeruginosa (strain NIES-843 / IAM M-2473).